The primary structure comprises 237 residues: Phosphoribosylaminoimidazole-succinocarboxamide synthase (237 aa).

This sequence belongs to the SAICAR synthetase family.

It catalyses the reaction 5-amino-1-(5-phospho-D-ribosyl)imidazole-4-carboxylate + L-aspartate + ATP = (2S)-2-[5-amino-1-(5-phospho-beta-D-ribosyl)imidazole-4-carboxamido]succinate + ADP + phosphate + 2 H(+). The protein operates within purine metabolism; IMP biosynthesis via de novo pathway; 5-amino-1-(5-phospho-D-ribosyl)imidazole-4-carboxamide from 5-amino-1-(5-phospho-D-ribosyl)imidazole-4-carboxylate: step 1/2. The chain is Phosphoribosylaminoimidazole-succinocarboxamide synthase from Psychrobacter arcticus (strain DSM 17307 / VKM B-2377 / 273-4).